We begin with the raw amino-acid sequence, 112 residues long: Nitrogen regulatory protein P-II (112 aa).

Tyr-51 is subject to O-UMP-tyrosine.

It belongs to the P(II) protein family. As to quaternary structure, homotrimer.

It is found in the plastid. It localises to the chloroplast. P-II indirectly controls the transcription of the glutamine synthetase gene (glnA). P-II prevents NR-II-catalyzed conversion of NR-I to NR-I-phosphate, the transcriptional activator of glnA. When P-II is uridylylated to P-II-UMP, these events are reversed. When the ratio of Gln to 2-ketoglutarate decreases, P-II is uridylylated to P-II-UMP, which causes the deadenylation of glutamine synthetase, so activating the enzyme. The sequence is that of Nitrogen regulatory protein P-II (glnB) from Pyropia yezoensis (Susabi-nori).